The sequence spans 277 residues: Release factor glutamine methyltransferase (277 aa).

S-adenosyl-L-methionine-binding positions include 117–121 (GTGCG), Asp-140, Trp-168, and Asn-182. 182-185 (NPPY) serves as a coordination point for substrate.

It belongs to the protein N5-glutamine methyltransferase family. PrmC subfamily.

The enzyme catalyses L-glutaminyl-[peptide chain release factor] + S-adenosyl-L-methionine = N(5)-methyl-L-glutaminyl-[peptide chain release factor] + S-adenosyl-L-homocysteine + H(+). Functionally, methylates the class 1 translation termination release factors RF1/PrfA and RF2/PrfB on the glutamine residue of the universally conserved GGQ motif. This Buchnera aphidicola subsp. Acyrthosiphon pisum (strain APS) (Acyrthosiphon pisum symbiotic bacterium) protein is Release factor glutamine methyltransferase.